Here is a 300-residue protein sequence, read N- to C-terminus: Forkhead transcription factor fkh-9 (300 aa).

A DNA-binding region (fork-head) is located at residues 66 to 161 (RPSLSYKDLI…DKQTLRRRNR (96 aa)). The interval 153–208 (KQTLRRRNRQQPRALAKKSDAGRTLSRDDRGSSGSGETSPSPSQPSISPPNENPMP) is disordered. Residues 169-183 (KKSDAGRTLSRDDRG) are compositionally biased toward basic and acidic residues. Positions 187-198 (SGETSPSPSQPS) are enriched in low complexity.

In terms of tissue distribution, expressed in mechanosensory neurons.

The protein resides in the nucleus. In terms of biological role, transcription factor. Binds to the regulatory elements of genes that contain the sequence motif 5'-TTGTTTCT-3'. Involved in regulating intestinal transcription of vitellogenin vit-2, acting in concert with transcription factors elt-2, mab-3 and daf-16, and also the TGF-beta/Sma/Mab pathway. Functions downstream of the insulin/IGF-1-like signaling (IIS) mediated pathway, in regeneration of axons after injury and in short-term memory, perhaps acting in neurons, and in modulation of longevity, perhaps acting non-neuronally. Plays a role in the modulation of endoplasmic reticulum (ER) homeostasis during chemical and pathogen stress, including exposure to the Gram-negative bacterium P.aeruginosa. This Caenorhabditis elegans protein is Forkhead transcription factor fkh-9.